The chain runs to 520 residues: O-methyltransferase cicE (520 aa).

S-adenosyl-L-methionine-binding positions include 300-301 (GG), Asp323, 355-356 (NF), and Arg371.

Belongs to the class I-like SAM-binding methyltransferase superfamily. Cation-independent O-methyltransferase family.

It participates in phytotoxin biosynthesis. Functionally, O-methyltransferase; part of the gene cluster that mediates the biosynthesis of cichorine, a phytotoxin active against knapweed, corn, and soybeans. The first step in the pathway is performed by the non-reducing polyketide synthase pkbA that condenses one acetyl-CoA starter unit with 3 malonyl-CoA units. PkbA also catalyzes one methylation step to produce 3-methylorsellinate. The nonribosomal peptide synthase-like protein cicB, the cytochrome P450 monooxygenase cicH and the O-methyltransferase cicE are involved in the conversion of 3-methylorsellinate into nidulol. CicB converts 3-methylorsellinate to a yet unidentified intermediate, cicH may play a ring-closing role for cichorine and cicE is plausibly responsible for the methylation of one of the phenol groups. The oxidoreductase cicC acts downstream with still unidentified enzymes to further convert nidulol into cichorine. The sequence is that of O-methyltransferase cicE from Emericella nidulans (strain FGSC A4 / ATCC 38163 / CBS 112.46 / NRRL 194 / M139) (Aspergillus nidulans).